The sequence spans 693 residues: Guanyl-specific ribonuclease pgl-3 (693 aa).

The tract at residues 205 to 447 is involved in dimerization; it reads KKLMIEGPKI…VNRIIESLEK (243 aa). His-437 serves as the catalytic Proton acceptor. Disordered stretches follow at residues 445 to 468, 523 to 591, and 620 to 693; these read LEKS…GPTT, AEKN…DATP, and SSNG…RGGS. Over residues 447–468 the composition is skewed to low complexity; that stretch reads KSSSSEPSATAKQTTTSNGPTT. 2 stretches are compositionally biased toward polar residues: residues 528 to 548 and 569 to 580; these read NTPS…SPTK and ITKVSPQPQERT. The interval 581–614 is required for interaction with sepa-1; it reads GTAWGSGDATPVPLATPVNEYKVSGFGAAPVASG. Composition is skewed to gly residues over residues 625–634, 641–660, and 668–693; these read SGRGSYGGGR, RGAY…SRGY, and RGSY…RGGS. Residues 633-693 are RNA-binding RGG-box; it reads GRGGDRGGRG…GFFGGSRGGS (61 aa).

May form a homodimer. Interacts with pgl-1 and pgl-2; this association is not required for P-granule localization of either pgl-1 or pgl-2. Interacts with sepa-1; the interaction is enhanced in the presence of RNA. Interacts with prmt-1; the interaction is direct. Methylated at arginine residues in the RNA-binding RGG-box by prmt-1. Methylation promotes P-granule degradation by autophagy. As to expression, highly expressed in the germline. Expressed in most somatic cells.

It is found in the cytoplasmic granule. It catalyses the reaction [RNA] containing guanosine + H2O = an [RNA fragment]-3'-guanosine-3'-phosphate + a 5'-hydroxy-ribonucleotide-3'-[RNA fragment].. Guanyl-specific endoribonuclease which cleaves the phosphodiester bond in single-stranded RNA between the 3'-guanylic residue and the 5'-OH residue of adjacent nucleotide, resulting in the formation of a corresponding 2',3'-cyclic phosphate intermediate. P-granule component involved in germline development. Together with the P-granule component pgl-1, is involved in the formation of P-granules. Together with pgl-1, probably recruits other granule components such as pos-1, mex-3 and glh-1, and RNA to P-granules. In vitro, binds mRNA; this interaction is required for the formation of liquid-like droplets that resemble P-granules. Most likely recruits pgl-1 into P-granules during autophagy. Associates with adapters such as sepa-1 and is required for the accumulation and degradation of P-granules by autophagy in somatic cells. This ensures exclusive localization of the P-granules in germ cells. In addition, may act redundantly with pgl-1 to protect germ cells from excessive germline apoptosis during normal oogenesis and development of the two gonadal arms. This may in part be through regulating the localization of sir-2.1 which is involved in germ cell apoptosis. May protect somatic cells from excessive apoptosis during normal development. The sequence is that of Guanyl-specific ribonuclease pgl-3 from Caenorhabditis elegans.